Reading from the N-terminus, the 543-residue chain is Probable zinc transporter protein DDB_G0283629 (543 aa).

The segment at 1-175 (MENFKNNELE…EESKPLNQLR (175 aa)) is disordered. Residues 1 to 186 (MENFKNNELE…LDSKKKARYS (186 aa)) lie on the Cytoplasmic side of the membrane. 2 stretches are compositionally biased toward low complexity: residues 11-26 (SSPI…SINN) and 41-55 (NNNN…NSHI). 2 stretches are compositionally biased toward basic and acidic residues: residues 56–66 (NNHDHKHNHEH) and 76–104 (HNHD…EHNV). Low complexity predominate over residues 105–116 (GNKNLLTNNNNQ). The span at 130–140 (EDGSSSGGGGG) shows a compositional bias: gly residues. The chain crosses the membrane as a helical span at residues 187–207 (LILALTLTTIFMVGEIVGGYF). Residues 208–216 (ANSLAIMTD) are Extracellular-facing. The helical transmembrane segment at 217-237 (AAHLLTDIGAMFLSLFAMWIS) threads the bilayer. The Cytoplasmic portion of the chain corresponds to 238–251 (QHPPTSSMSFGFHR). A helical membrane pass occupies residues 252 to 272 (AEILGALVSVLMIWALTGVLV). At 273–289 (YEAIQRILYPPDAVDGK) the chain is on the extracellular side. A helical transmembrane segment spans residues 290-310 (IMFIIASCGLFINIIDAIILH). Residues 311–375 (WGSGGHGHSH…VRNINVHSAY (65 aa)) lie on the Cytoplasmic side of the membrane. Residues 319 to 342 (SHGGGHGHSHGIGGGTQKKKSKKN) are disordered. Residues 376–396 (IHVLGDCFQSIGVMVASCIIW) traverse the membrane as a helical segment. The Extracellular segment spans residues 397-402 (VHPHWK). A helical membrane pass occupies residues 403-423 (IADPITTLIFSVIVLGTTIKL). Over 424-543 (LRESLGVLME…NDNLSSPPNQ (120 aa)) the chain is Cytoplasmic. The interval 516-543 (KCKDHSCPPPKPKKKKIKNDNLSSPPNQ) is disordered.

It belongs to the cation diffusion facilitator (CDF) transporter (TC 2.A.4) family. SLC30A subfamily.

The protein resides in the membrane. May be involved in zinc transport from the cytoplasm to either intracellular organelles or extracellular spaces. The protein is Probable zinc transporter protein DDB_G0283629 of Dictyostelium discoideum (Social amoeba).